Here is a 149-residue protein sequence, read N- to C-terminus: Large ribosomal subunit protein bL9 (149 aa).

It belongs to the bacterial ribosomal protein bL9 family.

Binds to the 23S rRNA. The protein is Large ribosomal subunit protein bL9 of Edwardsiella ictaluri (strain 93-146).